Consider the following 599-residue polypeptide: Beta-(1--&gt;2)glucan export ATP-binding/permease protein NdvA (599 aa).

Positions Gly-21 to Met-311 constitute an ABC transmembrane type-1 domain. 6 consecutive transmembrane segments (helical) span residues Trp-22–Phe-42, Leu-68–Leu-88, Glu-146–Trp-166, Leu-168–His-188, Val-254–Leu-274, and Gln-276–Ile-296. An ABC transporter domain is found at Val-345 to Ala-579. Gly-378–Ser-385 contacts ATP.

It belongs to the ABC transporter superfamily. Beta-(1--&gt;2)glucan exporter (TC 3.A.1.108.1) family. In terms of assembly, homodimer.

The protein resides in the cell inner membrane. The enzyme catalyses [(1-&gt;2)-beta-D-glucosyl](n)(in) + ATP + H2O = [(1-&gt;2)-beta-D-glucosyl](n)(out) + ADP + phosphate + H(+). Its function is as follows. Involved in beta-(1--&gt;2)glucan export. Transmembrane domains (TMD) form a pore in the inner membrane and the ATP-binding domain (NBD) is responsible for energy generation. The polypeptide is Beta-(1--&gt;2)glucan export ATP-binding/permease protein NdvA (Rhodopseudomonas palustris (strain ATCC BAA-98 / CGA009)).